Consider the following 346-residue polypeptide: UDP-3-O-acylglucosamine N-acyltransferase (346 aa).

Catalysis depends on His-240, which acts as the Proton acceptor.

This sequence belongs to the transferase hexapeptide repeat family. LpxD subfamily. As to quaternary structure, homotrimer.

The enzyme catalyses a UDP-3-O-[(3R)-3-hydroxyacyl]-alpha-D-glucosamine + a (3R)-hydroxyacyl-[ACP] = a UDP-2-N,3-O-bis[(3R)-3-hydroxyacyl]-alpha-D-glucosamine + holo-[ACP] + H(+). It functions in the pathway bacterial outer membrane biogenesis; LPS lipid A biosynthesis. Catalyzes the N-acylation of UDP-3-O-acylglucosamine using 3-hydroxyacyl-ACP as the acyl donor. Is involved in the biosynthesis of lipid A, a phosphorylated glycolipid that anchors the lipopolysaccharide to the outer membrane of the cell. The chain is UDP-3-O-acylglucosamine N-acyltransferase from Phocaeicola vulgatus (strain ATCC 8482 / DSM 1447 / JCM 5826 / CCUG 4940 / NBRC 14291 / NCTC 11154) (Bacteroides vulgatus).